The sequence spans 1706 residues: Brefeldin A-inhibited guanine nucleotide-exchange protein 4 (1706 aa).

The region spanning 555–742 (MLEQRRAYKI…GSLYDRVVKE (188 aa)) is the SEC7 domain. Glutamate 657 is a catalytic residue.

In terms of assembly, homodimer.

The protein localises to the cytoplasm. It localises to the cytosol. Its subcellular location is the membrane. Inhibited by brefeldin A. Functionally, activates the ARF proteins by exchanging bound GDP for free GTP. Plays a role in vesicular protein sorting. This Arabidopsis thaliana (Mouse-ear cress) protein is Brefeldin A-inhibited guanine nucleotide-exchange protein 4 (BIG4).